The following is a 388-amino-acid chain: Lipid-A-disaccharide synthase (388 aa).

It belongs to the LpxB family.

The catalysed reaction is a lipid X + a UDP-2-N,3-O-bis[(3R)-3-hydroxyacyl]-alpha-D-glucosamine = a lipid A disaccharide + UDP + H(+). The protein operates within bacterial outer membrane biogenesis; LPS lipid A biosynthesis. Condensation of UDP-2,3-diacylglucosamine and 2,3-diacylglucosamine-1-phosphate to form lipid A disaccharide, a precursor of lipid A, a phosphorylated glycolipid that anchors the lipopolysaccharide to the outer membrane of the cell. This is Lipid-A-disaccharide synthase from Burkholderia mallei (strain ATCC 23344).